The chain runs to 594 residues: UvrABC system protein C (594 aa).

In terms of domain architecture, GIY-YIG spans 13–99; it reads SSSGVYQYFD…IKQLKPKYNI (87 aa). The UVR domain maps to 205-240; the sequence is DRLIKELELKMERLSSNLRFEEALIYRDRIAKIQKI.

It belongs to the UvrC family. Interacts with UvrB in an incision complex.

Its subcellular location is the cytoplasm. The UvrABC repair system catalyzes the recognition and processing of DNA lesions. UvrC both incises the 5' and 3' sides of the lesion. The N-terminal half is responsible for the 3' incision and the C-terminal half is responsible for the 5' incision. The sequence is that of UvrABC system protein C from Helicobacter pylori (strain J99 / ATCC 700824) (Campylobacter pylori J99).